The following is a 606-amino-acid chain: NADH-ubiquinone oxidoreductase chain 5 (606 aa).

16 consecutive transmembrane segments (helical) span residues 1 to 21 (MNIF…PIIA), 38 to 58 (NIIS…IYSG), 87 to 107 (MIFV…SIWY), 114 to 134 (ITQF…LVTA), 140 to 160 (LFIG…WWYG), 171 to 191 (AILY…WFLS), 213 to 233 (LMGL…HPWL), 241 to 261 (TPVS…FLLI), 273 to 293 (AQTL…ICAL), 301 to 320 (IIAF…IGIN), 325 to 347 (AFLH…GSII), 366 to 386 (MPFT…MPFL), 409 to 429 (LLMT…MIFF), 457 to 477 (LLIG…PTTT), 488 to 508 (LMAL…SLAT), and 582 to 602 (GLIK…LLLL).

The protein belongs to the complex I subunit 5 family. As to quaternary structure, core subunit of respiratory chain NADH dehydrogenase (Complex I) which is composed of 45 different subunits.

It is found in the mitochondrion inner membrane. The catalysed reaction is a ubiquinone + NADH + 5 H(+)(in) = a ubiquinol + NAD(+) + 4 H(+)(out). Functionally, core subunit of the mitochondrial membrane respiratory chain NADH dehydrogenase (Complex I) which catalyzes electron transfer from NADH through the respiratory chain, using ubiquinone as an electron acceptor. Essential for the catalytic activity and assembly of complex I. This is NADH-ubiquinone oxidoreductase chain 5 (MT-ND5) from Rhinoceros unicornis (Greater Indian rhinoceros).